The following is a 61-amino-acid chain: MPFVTIDLFEGRSQEQKNQLAREVTEVVSRIAKAPKENIHVFINDMPEGTYYPQGEMKQKS.

Proline 2 acts as the Proton acceptor; via imino nitrogen in catalysis.

This sequence belongs to the 4-oxalocrotonate tautomerase family.

This chain is Probable tautomerase spyM18_1099, found in Streptococcus pyogenes serotype M18 (strain MGAS8232).